A 500-amino-acid polypeptide reads, in one-letter code: Protein nucleotidyltransferase YdiU (500 aa).

The ATP site is built by Gly98, Gly100, Arg101, Lys124, Asp136, Gly137, Arg187, and Arg194. The active-site Proton acceptor is Asp263. The Mg(2+) site is built by Asn264 and Asp273. An ATP-binding site is contributed by Asp273.

Belongs to the SELO family. Mg(2+) is required as a cofactor. The cofactor is Mn(2+).

It carries out the reaction L-seryl-[protein] + ATP = 3-O-(5'-adenylyl)-L-seryl-[protein] + diphosphate. The enzyme catalyses L-threonyl-[protein] + ATP = 3-O-(5'-adenylyl)-L-threonyl-[protein] + diphosphate. The catalysed reaction is L-tyrosyl-[protein] + ATP = O-(5'-adenylyl)-L-tyrosyl-[protein] + diphosphate. It catalyses the reaction L-histidyl-[protein] + UTP = N(tele)-(5'-uridylyl)-L-histidyl-[protein] + diphosphate. It carries out the reaction L-seryl-[protein] + UTP = O-(5'-uridylyl)-L-seryl-[protein] + diphosphate. The enzyme catalyses L-tyrosyl-[protein] + UTP = O-(5'-uridylyl)-L-tyrosyl-[protein] + diphosphate. In terms of biological role, nucleotidyltransferase involved in the post-translational modification of proteins. It can catalyze the addition of adenosine monophosphate (AMP) or uridine monophosphate (UMP) to a protein, resulting in modifications known as AMPylation and UMPylation. This is Protein nucleotidyltransferase YdiU from Herminiimonas arsenicoxydans.